A 208-amino-acid polypeptide reads, in one-letter code: MARYTGPVCRLCRREGAKLYLKGERCYTGKCAVDRRTYAPGQHGQGRKKISEYGLQLREKQKARRVYGILEGQFRAYFAEADRQQGVTGENLLRLLETRLDNVVFRLGFARSRNEARQFVLHNHFTLNGKKVNIPSIQLRVGDVIQLKEKSKDTPLFKEIVDGLGQKTPPAWLELDVNTLSGRVIALPKREDIDTNLQEHLIVELYSR.

The S4 RNA-binding domain occupies 98–163 (TRLDNVVFRL…TPLFKEIVDG (66 aa)).

Belongs to the universal ribosomal protein uS4 family. In terms of assembly, part of the 30S ribosomal subunit. Contacts protein S5. The interaction surface between S4 and S5 is involved in control of translational fidelity.

Functionally, one of the primary rRNA binding proteins, it binds directly to 16S rRNA where it nucleates assembly of the body of the 30S subunit. Its function is as follows. With S5 and S12 plays an important role in translational accuracy. This Heliobacterium modesticaldum (strain ATCC 51547 / Ice1) protein is Small ribosomal subunit protein uS4.